Consider the following 408-residue polypeptide: Serine/threonine transporter SstT (408 aa).

A run of 9 helical transmembrane segments spans residues 14–34 (GNLI…GIFS), 43–63 (IFGA…VFIL), 83–103 (IIFL…SISF), 143–163 (ALSS…GFAL), 181–201 (VLKI…GLVA), 219–239 (LIIL…LIVF), 247–269 (YPLI…SSAA), 290–310 (ISIP…IAIL), and 332–352 (VLAA…LLLI).

This sequence belongs to the dicarboxylate/amino acid:cation symporter (DAACS) (TC 2.A.23) family.

Its subcellular location is the cell inner membrane. It catalyses the reaction L-serine(in) + Na(+)(in) = L-serine(out) + Na(+)(out). The enzyme catalyses L-threonine(in) + Na(+)(in) = L-threonine(out) + Na(+)(out). In terms of biological role, involved in the import of serine and threonine into the cell, with the concomitant import of sodium (symport system). The polypeptide is Serine/threonine transporter SstT (Campylobacter lari (strain RM2100 / D67 / ATCC BAA-1060)).